We begin with the raw amino-acid sequence, 171 residues long: Transcription factor E (171 aa).

In terms of domain architecture, HTH TFE/IIEalpha-type spans 1–81; that stretch reads MLNLAKELVG…YWKVNVNQIN (81 aa).

Belongs to the TFE family. In terms of assembly, monomer. Interaction with RNA polymerase subunits RpoF and RpoE is necessary for Tfe stimulatory transcription activity. Able to interact with Tbp and RNA polymerase in the absence of DNA promoter. Interacts both with the preinitiation and elongation complexes.

Functionally, transcription factor that plays a role in the activation of archaeal genes transcribed by RNA polymerase. Facilitates transcription initiation by enhancing TATA-box recognition by TATA-box-binding protein (Tbp), and transcription factor B (Tfb) and RNA polymerase recruitment. Not absolutely required for transcription in vitro, but particularly important in cases where Tbp or Tfb function is not optimal. It dynamically alters the nucleic acid-binding properties of RNA polymerases by stabilizing the initiation complex and destabilizing elongation complexes. Seems to translocate with the RNA polymerase following initiation and acts by binding to the non template strand of the transcription bubble in elongation complexes. This Sulfolobus acidocaldarius (strain ATCC 33909 / DSM 639 / JCM 8929 / NBRC 15157 / NCIMB 11770) protein is Transcription factor E.